The primary structure comprises 193 residues: Phosphatidylglycerophosphatase and protein-tyrosine phosphatase 1 (193 aa).

The N-terminal 31 residues, methionine 1 to glycine 31, are a transit peptide targeting the mitochondrion. One can recognise a Tyrosine-protein phosphatase domain in the interval tryptophan 37–alanine 188. Lysine 85 carries the post-translational modification N6-succinyllysine. The Phosphocysteine intermediate role is filled by cysteine 132.

It belongs to the protein-tyrosine phosphatase family. Non-receptor class dual specificity subfamily. Interacts with STYXL1; the interaction inhibits PTPMT1 catalytic activity. Predominantly expressed in testis. Expressed at lower level in heart, brain, spleen, lung, liver, skeletal muscle, kidney, bone marrow, eye, lymph node, smooth muscle, prostate, thymus, stomach and uterus.

The protein resides in the mitochondrion inner membrane. It carries out the reaction a 1,2-diacyl-sn-glycero-3-phospho-(1'-sn-glycero-3'-phosphate) + H2O = a 1,2-diacyl-sn-glycero-3-phospho-(1'-sn-glycerol) + phosphate. It catalyses the reaction O-phospho-L-tyrosyl-[protein] + H2O = L-tyrosyl-[protein] + phosphate. The enzyme catalyses O-phospho-L-seryl-[protein] + H2O = L-seryl-[protein] + phosphate. The catalysed reaction is O-phospho-L-threonyl-[protein] + H2O = L-threonyl-[protein] + phosphate. It carries out the reaction 1,2-di-(9Z-octadecenoyl)-sn-glycero-3-phospho-(1'-sn-glycerol-3'-phosphate) + H2O = 1,2-di-(9Z-octadecenoyl)-sn-glycero-3-phospho-(1'-sn-glycerol) + phosphate. It catalyses the reaction 1,2-dioctanoyl-sn-glycero-3-phospho-(1D-myo-inositol-5-phosphate) + H2O = 1,2-dioctanoyl-sn-glycero-3-phospho-(1D-myo-inositol) + phosphate. The enzyme catalyses a 1-acyl-2-hexanoyl-sn-glycero-3-phospho-(1D-myo-inositol-5-phosphate) + H2O = a 1-acyl-2-hexanoyl-sn-glycero-3-phospho-(1D-myo-inositol) + phosphate. The catalysed reaction is 1,2-dibutyryl-sn-glycero-3-phospho-(1D-myo-inositol-5-phosphate) + H2O = 1,2-dibutyryl-sn-glycero-3-phospho-(1D-myo-inositol) + phosphate. The protein operates within phospholipid metabolism; phosphatidylglycerol biosynthesis; phosphatidylglycerol from CDP-diacylglycerol: step 2/2. Lipid phosphatase which dephosphorylates phosphatidylglycerophosphate (PGP) to phosphatidylglycerol (PG). PGP is an essential intermediate in the biosynthetic pathway of cardiolipin, a mitochondrial-specific phospholipid regulating the membrane integrity and activities of the organelle. Has also been shown to display phosphatase activity toward phosphoprotein substrates, specifically mediates dephosphorylation of mitochondrial proteins, thereby playing an essential role in ATP production. Has probably a preference for proteins phosphorylated on Ser and/or Thr residues compared to proteins phosphorylated on Tyr residues. Probably involved in regulation of insulin secretion in pancreatic beta cells. May prevent intrinsic apoptosis, probably by regulating mitochondrial membrane integrity. This Mus musculus (Mouse) protein is Phosphatidylglycerophosphatase and protein-tyrosine phosphatase 1.